Reading from the N-terminus, the 675-residue chain is UvrABC system protein B (675 aa).

The Helicase ATP-binding domain maps to 35-422; the sequence is EGVSDGLMFQ…ADNVVEQVVR (388 aa). 48–55 is a binding site for ATP; sequence GVTGSGKT. The Beta-hairpin motif lies at 101–124; that stretch reads YYDYYQPEAYVPTRDLFIEKDSSI. The region spanning 439–605 is the Helicase C-terminal domain; it reads QVDDLLGEIH…GVSKAVRELI (167 aa). The region spanning 633–668 is the UVR domain; sequence AREIRRLEKLMMDHARNLEFEQAAAARDALNALKSR.

This sequence belongs to the UvrB family. As to quaternary structure, forms a heterotetramer with UvrA during the search for lesions. Interacts with UvrC in an incision complex.

The protein resides in the cytoplasm. The UvrABC repair system catalyzes the recognition and processing of DNA lesions. A damage recognition complex composed of 2 UvrA and 2 UvrB subunits scans DNA for abnormalities. Upon binding of the UvrA(2)B(2) complex to a putative damaged site, the DNA wraps around one UvrB monomer. DNA wrap is dependent on ATP binding by UvrB and probably causes local melting of the DNA helix, facilitating insertion of UvrB beta-hairpin between the DNA strands. Then UvrB probes one DNA strand for the presence of a lesion. If a lesion is found the UvrA subunits dissociate and the UvrB-DNA preincision complex is formed. This complex is subsequently bound by UvrC and the second UvrB is released. If no lesion is found, the DNA wraps around the other UvrB subunit that will check the other stand for damage. This Bordetella bronchiseptica (strain ATCC BAA-588 / NCTC 13252 / RB50) (Alcaligenes bronchisepticus) protein is UvrABC system protein B.